The following is a 104-amino-acid chain: Iron-sulfur cluster assembly protein CyaY (104 aa).

Belongs to the frataxin family.

Involved in iron-sulfur (Fe-S) cluster assembly. May act as a regulator of Fe-S biogenesis. This chain is Iron-sulfur cluster assembly protein CyaY, found in Vibrio campbellii (strain ATCC BAA-1116).